The following is a 459-amino-acid chain: Exodeoxyribonuclease 7 large subunit (459 aa).

This sequence belongs to the XseA family. As to quaternary structure, heterooligomer composed of large and small subunits.

It localises to the cytoplasm. The catalysed reaction is Exonucleolytic cleavage in either 5'- to 3'- or 3'- to 5'-direction to yield nucleoside 5'-phosphates.. In terms of biological role, bidirectionally degrades single-stranded DNA into large acid-insoluble oligonucleotides, which are then degraded further into small acid-soluble oligonucleotides. This Pseudomonas putida (strain ATCC 47054 / DSM 6125 / CFBP 8728 / NCIMB 11950 / KT2440) protein is Exodeoxyribonuclease 7 large subunit.